A 321-amino-acid polypeptide reads, in one-letter code: Opticin (321 aa).

A signal peptide spans 1 to 19 (MKLLALLSLLILMLQEART). At Tyr61 the chain carries Sulfotyrosine. In terms of domain architecture, LRRNT spans 105–142 (LLAAPANHGLPTCLICVCLGSSVYCDDADLENIPPLPQ). 6 LRR repeats span residues 143-164 (TTAY…DFKG), 167-188 (KLKR…ALRL), 191-212 (ALRD…PTSI), 237-258 (KLQF…LPLS), 259-279 (LRSL…AFCD), and 289-309 (PLED…PSAY). The cysteines at positions 278 and 311 are disulfide-linked. Asn301 is a glycosylation site (N-linked (GlcNAc...) asparagine).

This sequence belongs to the small leucine-rich proteoglycan (SLRP) family. SLRP class III subfamily. Homodimer. In terms of processing, O-glycosylated (sialylated oligosaccharides). Post-translationally, sulfated on tyrosine residues. Proteolytically cleaved by MMP1, MMP2, MMP3, MMP7, MMP8, MMP9, ADAMTS4, and ADAMTS5. Proteolytically cleaved by MMP13.

It is found in the secreted. The protein resides in the extracellular space. Its subcellular location is the extracellular matrix. Its function is as follows. Inhibits angiogenesis in the vitreous humor of the eye, and therefore represses neovascularization. Binds collagen fibrils. May be involved in collagen fiber organization via regulation of other members of the small leucine-rich repeat proteoglycan superfamily. This chain is Opticin (OPTC), found in Bos taurus (Bovine).